The chain runs to 43 residues: Potassium channel toxin gamma-KTx 4.2 (43 aa).

4 disulfides stabilise this stretch: Cys-5–Cys-23, Cys-11–Cys-34, Cys-20–Cys-39, and Cys-24–Cys-41.

It belongs to the ergtoxin family. Gamma-KTx 4 subfamily. As to expression, expressed by the venom gland.

It localises to the secreted. Its function is as follows. Reversibly blocks Kv11/ERG potassium channels. This is Potassium channel toxin gamma-KTx 4.2 from Centruroides noxius (Mexican scorpion).